A 416-amino-acid chain; its full sequence is Tryptophan synthase beta chain (416 aa).

K109 carries the post-translational modification N6-(pyridoxal phosphate)lysine.

Belongs to the TrpB family. In terms of assembly, tetramer of two alpha and two beta chains. Requires pyridoxal 5'-phosphate as cofactor.

It carries out the reaction (1S,2R)-1-C-(indol-3-yl)glycerol 3-phosphate + L-serine = D-glyceraldehyde 3-phosphate + L-tryptophan + H2O. Its pathway is amino-acid biosynthesis; L-tryptophan biosynthesis; L-tryptophan from chorismate: step 5/5. Functionally, the beta subunit is responsible for the synthesis of L-tryptophan from indole and L-serine. The protein is Tryptophan synthase beta chain of Synechococcus sp. (strain WH7803).